The chain runs to 432 residues: Adenylosuccinate synthetase (432 aa).

Residues 13 to 19 (GDEGKGK) and 41 to 43 (GHT) contribute to the GTP site. The active-site Proton acceptor is the D14. Mg(2+) is bound by residues D14 and G41. IMP contacts are provided by residues 14 to 17 (DEGK), 39 to 42 (NAGH), T130, R144, Q225, T240, and R304. H42 serves as the catalytic Proton donor. 300-306 (ATTGRRR) serves as a coordination point for substrate. Residues R306, 332-334 (KLD), and 415-417 (STG) contribute to the GTP site.

The protein belongs to the adenylosuccinate synthetase family. As to quaternary structure, homodimer. The cofactor is Mg(2+).

The protein resides in the cytoplasm. It catalyses the reaction IMP + L-aspartate + GTP = N(6)-(1,2-dicarboxyethyl)-AMP + GDP + phosphate + 2 H(+). It functions in the pathway purine metabolism; AMP biosynthesis via de novo pathway; AMP from IMP: step 1/2. Its function is as follows. Plays an important role in the de novo pathway of purine nucleotide biosynthesis. Catalyzes the first committed step in the biosynthesis of AMP from IMP. In Enterobacter sp. (strain 638), this protein is Adenylosuccinate synthetase.